The primary structure comprises 334 residues: PDZ domain-containing protein MAGIX (334 aa).

2 stretches are compositionally biased toward basic and acidic residues: residues 1-13 (MEPR…DPRG) and 209-224 (LETH…EPRK). Disordered stretches follow at residues 1–26 (MEPR…LAGP) and 209–306 (LETH…WLVP). The 85-residue stretch at 125–209 (SVELVRGYAG…QLHLVIRRPL (85 aa)) folds into the PDZ domain. Residues 244-260 (GSRSSSTSLVQHPPSRT) show a composition bias toward polar residues. Position 272 is a phosphoserine (S272).

The polypeptide is PDZ domain-containing protein MAGIX (MAGIX) (Homo sapiens (Human)).